A 585-amino-acid polypeptide reads, in one-letter code: MSQTEQAVREDGVIRSVSGPVVTARGLDARMNDVVYVGDEGLMGEVIEIEDNVTTVQVYEETSGIGPDEPVRNTGEPLSVDLGPGLLDTIYDGVQRPLDILEDKMGSPYLDRGVDAPGIELDTEWEFEPTVSEGDTVESGDEVGIVEETVTIDHKVLVPPDYEGGEVTTVKSGEFTVEETVVELSSGESVQMRQEWPVREPRPTVEKKTPREPLVSGQRILDGLFPIAKGGTAAIPGPFGSGKTVTQHQLAKYADADIIIYVGCGERGNEMTEVIDDFPELEDPSTGNPLMARTSLIANTSNMPVAARESCVYTGITIAEFYRDMGYDVALMADSTSRWAEAMREISSRLEEMPGEEGYPAYLAARLAQFYERAGYFENVNGTEGSVSAIGAVSPPGGDFSEPVTQNTLRIVKTFWALDADLAERRHFPSINWDESYSLYKEQLDPWFQENVEDDWPEERQWAVDVLDEESELQEIVQLVGKDALPDDQQLTLEVARYLRESYLQQNAFHPVDTYCSPEKTYLTVTAIHQFNDEAFEALDAGVPVDEIISIDAAPRLNRIGVQDDYEEYIATLKEDIATQLQELY.

Residues 192–211 (MRQEWPVREPRPTVEKKTPR) are disordered. Basic and acidic residues predominate over residues 196-211 (WPVREPRPTVEKKTPR). Position 237 to 244 (237 to 244 (GPFGSGKT)) interacts with ATP.

Belongs to the ATPase alpha/beta chains family. In terms of assembly, has multiple subunits with at least A(3), B(3), C, D, E, F, H, I and proteolipid K(x).

Its subcellular location is the cell membrane. It catalyses the reaction ATP + H2O + 4 H(+)(in) = ADP + phosphate + 5 H(+)(out). Component of the A-type ATP synthase that produces ATP from ADP in the presence of a proton gradient across the membrane. The A chain is the catalytic subunit. This chain is A-type ATP synthase subunit A, found in Haloquadratum walsbyi (strain DSM 16790 / HBSQ001).